The primary structure comprises 201 residues: Nascent polypeptide-associated complex subunit alpha (201 aa).

The span at 1 to 20 shows a compositional bias: basic and acidic residues; sequence MANPRVEELPDEEVKKTVVD. Disordered regions lie at residues 1–51 and 118–165; these read MANP…SRNE and AQQL…IEDK. A compositionally biased stretch (acidic residues) spans 21-36; sequence DHDDDSSSDSDGEEET. One can recognise an NAC-A/B domain in the interval 48-113; the sequence is SRNEKKARKA…AKIEDLNASA (66 aa). Residues 126 to 149 show a composition bias toward basic and acidic residues; it reads GHDHDHAGHSHGEAKASEGDAKKE. Positions 150–161 are enriched in acidic residues; that stretch reads EEDDDEEVDADG. In terms of domain architecture, UBA spans 162 to 200; sequence IEDKDIELVMTQAGVSRTKAIKALKENDNDIVNSIMALS.

This sequence belongs to the NAC-alpha family. In terms of assembly, part of the nascent polypeptide-associated complex (NAC), consisting of EGD2 and EGD1. NAC associates with ribosomes via EGD1.

It is found in the cytoplasm. Its subcellular location is the nucleus. Its function is as follows. Component of the nascent polypeptide-associated complex (NAC), a dynamic component of the ribosomal exit tunnel, protecting the emerging polypeptides from interaction with other cytoplasmic proteins to ensure appropriate nascent protein targeting. The NAC complex also promotes mitochondrial protein import by enhancing productive ribosome interactions with the outer mitochondrial membrane and blocks the inappropriate interaction of ribosomes translating non-secretory nascent polypeptides with translocation sites in the membrane of the endoplasmic reticulum. EGD2 may also be involved in transcription regulation. The chain is Nascent polypeptide-associated complex subunit alpha (EGD2) from Pyricularia oryzae (strain 70-15 / ATCC MYA-4617 / FGSC 8958) (Rice blast fungus).